The following is a 214-amino-acid chain: Pyridoxine/pyridoxamine 5'-phosphate oxidase (214 aa).

Residues R8 to Y11 and K66 each bind substrate. Residues R61–K66, F76–T77, R82, K83, and Q105 each bind FMN. Y123, R127, and S131 together coordinate substrate. FMN-binding positions include Q140–S141 and W184. R190–H192 is a binding site for substrate. Residue R194 participates in FMN binding.

This sequence belongs to the pyridoxamine 5'-phosphate oxidase family. As to quaternary structure, homodimer. It depends on FMN as a cofactor.

It catalyses the reaction pyridoxamine 5'-phosphate + O2 + H2O = pyridoxal 5'-phosphate + H2O2 + NH4(+). The catalysed reaction is pyridoxine 5'-phosphate + O2 = pyridoxal 5'-phosphate + H2O2. It functions in the pathway cofactor metabolism; pyridoxal 5'-phosphate salvage; pyridoxal 5'-phosphate from pyridoxamine 5'-phosphate: step 1/1. The protein operates within cofactor metabolism; pyridoxal 5'-phosphate salvage; pyridoxal 5'-phosphate from pyridoxine 5'-phosphate: step 1/1. Catalyzes the oxidation of either pyridoxine 5'-phosphate (PNP) or pyridoxamine 5'-phosphate (PMP) into pyridoxal 5'-phosphate (PLP). In Burkholderia pseudomallei (strain 1106a), this protein is Pyridoxine/pyridoxamine 5'-phosphate oxidase.